The following is a 355-amino-acid chain: UDP-N-acetylglucosamine--N-acetylmuramyl-(pentapeptide) pyrophosphoryl-undecaprenol N-acetylglucosamine transferase (355 aa).

UDP-N-acetyl-alpha-D-glucosamine is bound by residues 11–13, Arg164, Ser194, and Gln289; that span reads TAG.

Belongs to the glycosyltransferase 28 family. MurG subfamily.

It localises to the cell membrane. It carries out the reaction di-trans,octa-cis-undecaprenyl diphospho-N-acetyl-alpha-D-muramoyl-L-alanyl-D-glutamyl-meso-2,6-diaminopimeloyl-D-alanyl-D-alanine + UDP-N-acetyl-alpha-D-glucosamine = di-trans,octa-cis-undecaprenyl diphospho-[N-acetyl-alpha-D-glucosaminyl-(1-&gt;4)]-N-acetyl-alpha-D-muramoyl-L-alanyl-D-glutamyl-meso-2,6-diaminopimeloyl-D-alanyl-D-alanine + UDP + H(+). The protein operates within cell wall biogenesis; peptidoglycan biosynthesis. Its function is as follows. Cell wall formation. Catalyzes the transfer of a GlcNAc subunit on undecaprenyl-pyrophosphoryl-MurNAc-pentapeptide (lipid intermediate I) to form undecaprenyl-pyrophosphoryl-MurNAc-(pentapeptide)GlcNAc (lipid intermediate II). In Lachnoclostridium phytofermentans (strain ATCC 700394 / DSM 18823 / ISDg) (Clostridium phytofermentans), this protein is UDP-N-acetylglucosamine--N-acetylmuramyl-(pentapeptide) pyrophosphoryl-undecaprenol N-acetylglucosamine transferase.